We begin with the raw amino-acid sequence, 247 residues long: Pulmonary surfactant-associated protein A (247 aa).

The signal sequence occupies residues 1–15 (MLLLSLALTLISAPA). Residues 27-99 (GSPGIPGTPG…PGERGPPGLP (73 aa)) enclose the Collagen-like domain. 4-hydroxyproline occurs at positions 29, 32, 35, 41, 53, 56, 62, 66, and 69. Residues 30–100 (GIPGTPGSHG…GERGPPGLPA (71 aa)) form a disordered region. Residues 41–50 (PGRDGRDGVK) show a composition bias toward basic and acidic residues. The segment covering 53–64 (PGPPGPMGPPGG) has biased composition (pro residues). Residues 83 to 92 (ERGDKGEPGE) show a composition bias toward basic and acidic residues. A C-type lectin domain is found at 132 to 247 (AVGEKIFSTN…LQYRLVICEF (116 aa)). Cystine bridges form between Cys-154–Cys-245 and Cys-223–Cys-237. Asn-206 is a glycosylation site (N-linked (GlcNAc...) asparagine). 4 residues coordinate Ca(2+): Glu-214, Arg-216, Asn-233, and Asp-234.

Belongs to the SFTPA family. Oligomeric complex of 6 set of homotrimers.

The protein resides in the secreted. The protein localises to the extracellular space. Its subcellular location is the extracellular matrix. It localises to the surface film. In terms of biological role, in presence of calcium ions, it binds to surfactant phospholipids and contributes to lower the surface tension at the air-liquid interface in the alveoli of the mammalian lung and is essential for normal respiration. Enhances the expression of MYO18A/SP-R210 on alveolar macrophages. This is Pulmonary surfactant-associated protein A (SFTPA1) from Oryctolagus cuniculus (Rabbit).